Reading from the N-terminus, the 540-residue chain is Chaperonin GroEL (540 aa).

ATP-binding positions include 29 to 32 (TLGP), 86 to 90 (DGTTT), Gly-413, 477 to 479 (DAL), and Asp-493.

It belongs to the chaperonin (HSP60) family. As to quaternary structure, forms a cylinder of 14 subunits composed of two heptameric rings stacked back-to-back. Interacts with the co-chaperonin GroES.

It is found in the cytoplasm. The enzyme catalyses ATP + H2O + a folded polypeptide = ADP + phosphate + an unfolded polypeptide.. Together with its co-chaperonin GroES, plays an essential role in assisting protein folding. The GroEL-GroES system forms a nano-cage that allows encapsulation of the non-native substrate proteins and provides a physical environment optimized to promote and accelerate protein folding. This chain is Chaperonin GroEL, found in Clostridium botulinum (strain Alaska E43 / Type E3).